Reading from the N-terminus, the 243-residue chain is Adenine phosphoribosyltransferase 1, chloroplastic (243 aa).

A chloroplast-targeting transit peptide spans 1–52 (MQTIIISPLVSHRLCLARAVPCNRLLNNHHRAPPSIRLSNHRSTTSLRLFSS). Residue Gln2 is modified to N-acetylalanine.

The protein belongs to the purine/pyrimidine phosphoribosyltransferase family. In terms of assembly, homodimer.

It localises to the plastid. It is found in the chloroplast. Its subcellular location is the cytoplasm. The catalysed reaction is AMP + diphosphate = 5-phospho-alpha-D-ribose 1-diphosphate + adenine. The protein operates within purine metabolism; AMP biosynthesis via salvage pathway; AMP from adenine: step 1/1. In terms of biological role, catalyzes a salvage reaction resulting in the formation of AMP, that is energically less costly than de novo synthesis. Contributes primarily to the recycling of adenine into adenylate nucleotides, but is also involved in the inactivation of cytokinins by phosphoribosylation. Catalyzes the conversion of cytokinins from free bases (active form) to the corresponding nucleotides (inactive form). This chain is Adenine phosphoribosyltransferase 1, chloroplastic (APT1), found in Arabidopsis thaliana (Mouse-ear cress).